The sequence spans 920 residues: Bifunctional aspartokinase/homoserine dehydrogenase 1, chloroplastic (920 aa).

Positions 1–21 (MRSLTVASRHPGAAFSTRRRP) are disordered. Residues 1-92 (MRSLTVASRH…EAIADLPKGD (92 aa)) constitute a chloroplast transit peptide. Residues 93–341 (MWSVHKFGGT…VSEAVILSTL (249 aa)) form an aspartokinase region. Residues 342-566 (SYQEAWEMSY…LSKTTLAVGI (225 aa)) form an interface region. 2 ACT domains span residues 416–491 (VEGT…VIHN) and 497–574 (TVGL…LIGR). A homoserine dehydrogenase region spans residues 567–920 (IGPGLIGRTL…RLSSYLGAPS (354 aa)). Residues isoleucine 572 and alanine 601 each coordinate NAD(+). Position 572 (isoleucine 572) interacts with NADP(+). Residue isoleucine 572 participates in NADPH binding. NADP(+) is bound by residues arginine 604, threonine 653, and lysine 677. An NAD(+)-binding site is contributed by threonine 653. The NADPH site is built by threonine 653 and lysine 677. Na(+) is bound by residues glutamate 704, valine 707, alanine 709, and leucine 711. NADP(+) contacts are provided by glycine 762 and glutamate 765. L-homoserine is bound by residues glutamate 765 and aspartate 776. Lysine 780 (proton donor) is an active-site residue. Glycine 897 is an NAD(+) binding site. Residue glycine 897 participates in NADP(+) binding. Glycine 897 is a binding site for NADPH.

In the N-terminal section; belongs to the aspartokinase family. The protein in the C-terminal section; belongs to the homoserine dehydrogenase family. In terms of assembly, homo- or heterodimer. A metal cation is required as a cofactor.

The protein localises to the plastid. It localises to the chloroplast. It catalyses the reaction L-homoserine + NADP(+) = L-aspartate 4-semialdehyde + NADPH + H(+). The enzyme catalyses L-homoserine + NAD(+) = L-aspartate 4-semialdehyde + NADH + H(+). It carries out the reaction L-aspartate + ATP = 4-phospho-L-aspartate + ADP. It participates in amino-acid biosynthesis; L-lysine biosynthesis via DAP pathway; (S)-tetrahydrodipicolinate from L-aspartate: step 1/4. Its pathway is amino-acid biosynthesis; L-methionine biosynthesis via de novo pathway; L-homoserine from L-aspartate: step 1/3. It functions in the pathway amino-acid biosynthesis; L-methionine biosynthesis via de novo pathway; L-homoserine from L-aspartate: step 3/3. The protein operates within amino-acid biosynthesis; L-threonine biosynthesis; L-threonine from L-aspartate: step 1/5. It participates in amino-acid biosynthesis; L-threonine biosynthesis; L-threonine from L-aspartate: step 3/5. Its function is as follows. Bifunctional aspartate kinase and homoserine dehydrogenase that catalyzes the first and the third steps toward the synthesis of lysine, methionine and threonine from aspartate. This Zea mays (Maize) protein is Bifunctional aspartokinase/homoserine dehydrogenase 1, chloroplastic (AKHSDH1).